The sequence spans 404 residues: Phosphoglycerate kinase (404 aa).

Substrate-binding positions include 22 to 24 (DLN), Arg-37, 60 to 63 (HLGR), Arg-119, and Arg-156. Residues Lys-206, Gly-302, Glu-333, and 359 to 362 (GGDS) each bind ATP.

Belongs to the phosphoglycerate kinase family. In terms of assembly, monomer.

Its subcellular location is the cytoplasm. It catalyses the reaction (2R)-3-phosphoglycerate + ATP = (2R)-3-phospho-glyceroyl phosphate + ADP. It functions in the pathway carbohydrate degradation; glycolysis; pyruvate from D-glyceraldehyde 3-phosphate: step 2/5. This is Phosphoglycerate kinase from Clavibacter sepedonicus (Clavibacter michiganensis subsp. sepedonicus).